The following is a 239-amino-acid chain: Probable transcriptional regulatory protein VC_A0006 (239 aa).

This sequence belongs to the TACO1 family.

The protein resides in the cytoplasm. This is Probable transcriptional regulatory protein VC_A0006 from Vibrio cholerae serotype O1 (strain ATCC 39315 / El Tor Inaba N16961).